The primary structure comprises 377 residues: RIB43A-like with coiled-coils protein 2 (377 aa).

A coiled-coil region spans residues 188 to 238 (ELKFDEAARDLQRLEITTRKAVCAAVKEFNKKQVVELAERKRQVKQQEQED). Residues 355 to 377 (QLDAAPSSQPTEDYFSQFNTRSR) are disordered. Residues 360 to 377 (PSSQPTEDYFSQFNTRSR) show a composition bias toward polar residues.

This sequence belongs to the RIB43A family. Microtubule inner protein component of sperm flagellar doublet microtubules.

The protein resides in the cytoplasm. It is found in the cytoskeleton. Its subcellular location is the cilium axoneme. The protein localises to the flagellum axoneme. Its function is as follows. Microtubule inner protein (MIP) part of the dynein-decorated doublet microtubules (DMTs) in cilia axoneme, which is required for motile cilia beating. The polypeptide is RIB43A-like with coiled-coils protein 2 (Rattus norvegicus (Rat)).